Here is a 466-residue protein sequence, read N- to C-terminus: Cysteine--tRNA ligase (466 aa).

Residue cysteine 28 participates in Zn(2+) binding. The 'HIGH' region signature appears at 30-40; sequence PTVYNYIHIGN. Residues cysteine 208, histidine 233, and glutamate 237 each contribute to the Zn(2+) site. The short motif at 265–269 is the 'KMSKS' region element; that stretch reads KMSKS. Lysine 268 serves as a coordination point for ATP. A Phosphoserine modification is found at serine 269.

The protein belongs to the class-I aminoacyl-tRNA synthetase family. Monomer. Zn(2+) serves as cofactor.

It is found in the cytoplasm. The enzyme catalyses tRNA(Cys) + L-cysteine + ATP = L-cysteinyl-tRNA(Cys) + AMP + diphosphate. This chain is Cysteine--tRNA ligase, found in Shouchella clausii (strain KSM-K16) (Alkalihalobacillus clausii).